We begin with the raw amino-acid sequence, 1065 residues long: Probable arabinosyltransferase B (1065 aa).

The next 12 helical transmembrane spans lie at 15–37, 204–226, 241–263, 394–413, 417–436, 441–463, 510–527, 540–557, 567–589, 596–618, 633–655, and 667–689; these read WVAT…LPVV, LKLA…LWRL, NWRT…HVIG, YSRL…TLGV, GLIA…RILV, VVGT…TVVF, FGFL…FIML, AWRL…LMFT, LFAA…AVLG, AFLA…WWYV, GGIT…AIWL, and LARA…VFIA.

It belongs to the emb family.

Its subcellular location is the cell membrane. Its function is as follows. Arabinosyl transferase responsible for the polymerization of arabinose into the arabinan of arabinogalactan. In Mycobacterium avium, this protein is Probable arabinosyltransferase B (embB).